The sequence spans 254 residues: NAD-dependent protein deacetylase 1 (254 aa).

Positions A5 to N254 constitute a Deacetylase sirtuin-type domain. The NAD(+) site is built by A31, T35, F42, R43, Q108, I110, D111, and H128. Position 42 (F42) interacts with nicotinamide. Nicotinamide-binding residues include I110 and D111. Residue H128 is the Proton acceptor of the active site. The Zn(2+) site is built by C136, C139, C160, and C163. NAD(+)-binding residues include S201, S202, N226, D243, and I244.

Belongs to the sirtuin family. Class U subfamily. It depends on Zn(2+) as a cofactor.

The protein localises to the cytoplasm. It catalyses the reaction N(6)-acetyl-L-lysyl-[protein] + NAD(+) + H2O = 2''-O-acetyl-ADP-D-ribose + nicotinamide + L-lysyl-[protein]. Its function is as follows. NAD-dependent protein deacetylase which modulates the activities of several enzymes which are inactive in their acetylated form. The sequence is that of NAD-dependent protein deacetylase 1 from Bradyrhizobium diazoefficiens (strain JCM 10833 / BCRC 13528 / IAM 13628 / NBRC 14792 / USDA 110).